Reading from the N-terminus, the 354-residue chain is S-adenosylmethionine:tRNA ribosyltransferase-isomerase (354 aa).

This sequence belongs to the QueA family. As to quaternary structure, monomer.

Its subcellular location is the cytoplasm. The catalysed reaction is 7-aminomethyl-7-carbaguanosine(34) in tRNA + S-adenosyl-L-methionine = epoxyqueuosine(34) in tRNA + adenine + L-methionine + 2 H(+). Its pathway is tRNA modification; tRNA-queuosine biosynthesis. Its function is as follows. Transfers and isomerizes the ribose moiety from AdoMet to the 7-aminomethyl group of 7-deazaguanine (preQ1-tRNA) to give epoxyqueuosine (oQ-tRNA). The polypeptide is S-adenosylmethionine:tRNA ribosyltransferase-isomerase (Salmonella paratyphi A (strain ATCC 9150 / SARB42)).